Consider the following 309-residue polypeptide: MSSTQFNKGPSYGLSAEVKNRLQSKYDPQKEAELRSWIEGLTGLSVGPDFQKGLKDGIILCTLMNKLQPGSVPKINRSMQNWHQLENLSNFIKAMVSYGMNPVDLFEANDLFESGNLTQVQVSLLALAGKAKTKGLQSGVDIGVKYSEKQERNFDDATMKAGQCVIGLQMGTNKCASQSGMTAYGTRRHLYDPKNHILPPMDHSTISLQMGTNKCASQVGMTAPGTRRHIYDTKLGTDKCDNSSMSLQMGYTQGANQSGQVFGLGRQIYDPKYCPQGPAADGAPAAAGDGPGPGEPSECPPYYQEEAGY.

Residue Ser-2 is modified to N-acetylserine. N6-acetyllysine is present on residues Lys-8 and Lys-25. In terms of domain architecture, Calponin-homology (CH) spans 28–132; it reads PQKEAELRSW…SLLALAGKAK (105 aa). Ser-138 carries the post-translational modification Phosphoserine. Calponin-like repeat units lie at residues 166–191, 206–231, and 245–269; these read IGLQ…RHLY, ISLQ…RHIY, and MSLQ…RQIY. The interval 273 to 309 is disordered; it reads YCPQGPAADGAPAAAGDGPGPGEPSECPPYYQEEAGY. Residues 277 to 288 are compositionally biased toward low complexity; the sequence is GPAADGAPAAAG.

This sequence belongs to the calponin family.

Its function is as follows. Thin filament-associated protein that is implicated in the regulation and modulation of smooth muscle contraction. It is capable of binding to actin, calmodulin and tropomyosin. The interaction of calponin with actin inhibits the actomyosin Mg-ATPase activity. This Bos taurus (Bovine) protein is Calponin-2 (CNN2).